A 336-amino-acid chain; its full sequence is Dihydroorotate dehydrogenase (quinone) (336 aa).

Residues 62-66 (AGLDK) and Thr-86 contribute to the FMN site. Lys-66 provides a ligand contact to substrate. Substrate is bound at residue 111 to 115 (NRMGF). Residues Asn-139 and Asn-172 each coordinate FMN. Asn-172 lines the substrate pocket. Ser-175 (nucleophile) is an active-site residue. Residue Asn-177 coordinates substrate. Positions 217 and 245 each coordinate FMN. Substrate is bound at residue 246-247 (NT). FMN is bound by residues Gly-268, Gly-297, and 318–319 (YS).

Belongs to the dihydroorotate dehydrogenase family. Type 2 subfamily. Monomer. FMN is required as a cofactor.

Its subcellular location is the cell membrane. The catalysed reaction is (S)-dihydroorotate + a quinone = orotate + a quinol. The protein operates within pyrimidine metabolism; UMP biosynthesis via de novo pathway; orotate from (S)-dihydroorotate (quinone route): step 1/1. In terms of biological role, catalyzes the conversion of dihydroorotate to orotate with quinone as electron acceptor. In Edwardsiella ictaluri (strain 93-146), this protein is Dihydroorotate dehydrogenase (quinone).